We begin with the raw amino-acid sequence, 337 residues long: DNA-directed RNA polymerase subunit alpha (337 aa).

The alpha N-terminal domain (alpha-NTD) stretch occupies residues 1-233 (MIREKVTVST…DLFIPFLHME (233 aa)). The interval 266–337 (KLALKSIFID…FAIDLPKNQF (72 aa)) is alpha C-terminal domain (alpha-CTD).

This sequence belongs to the RNA polymerase alpha chain family. In terms of assembly, in plastids the minimal PEP RNA polymerase catalytic core is composed of four subunits: alpha, beta, beta', and beta''. When a (nuclear-encoded) sigma factor is associated with the core the holoenzyme is formed, which can initiate transcription.

It is found in the plastid. The protein localises to the chloroplast. It catalyses the reaction RNA(n) + a ribonucleoside 5'-triphosphate = RNA(n+1) + diphosphate. Functionally, DNA-dependent RNA polymerase catalyzes the transcription of DNA into RNA using the four ribonucleoside triphosphates as substrates. In Ipomoea purpurea (Common morning glory), this protein is DNA-directed RNA polymerase subunit alpha.